We begin with the raw amino-acid sequence, 116 residues long: Large ribosomal subunit protein bL20 (116 aa).

The protein belongs to the bacterial ribosomal protein bL20 family.

Functionally, binds directly to 23S ribosomal RNA and is necessary for the in vitro assembly process of the 50S ribosomal subunit. It is not involved in the protein synthesizing functions of that subunit. The sequence is that of Large ribosomal subunit protein bL20 from Desulforapulum autotrophicum (strain ATCC 43914 / DSM 3382 / VKM B-1955 / HRM2) (Desulfobacterium autotrophicum).